A 332-amino-acid polypeptide reads, in one-letter code: Fructose-1,6-bisphosphatase class 1 (332 aa).

The Mg(2+) site is built by glutamate 89, aspartate 110, leucine 112, and aspartate 113. Residues 113-116, asparagine 206, tyrosine 239, 257-259, and lysine 269 contribute to the substrate site; these read DGSS and YLY. Position 275 (glutamate 275) interacts with Mg(2+).

Belongs to the FBPase class 1 family. Homotetramer. Requires Mg(2+) as cofactor.

The protein resides in the cytoplasm. It carries out the reaction beta-D-fructose 1,6-bisphosphate + H2O = beta-D-fructose 6-phosphate + phosphate. The protein operates within carbohydrate biosynthesis; gluconeogenesis. This chain is Fructose-1,6-bisphosphatase class 1, found in Klebsiella pneumoniae subsp. pneumoniae (strain ATCC 700721 / MGH 78578).